An 82-amino-acid polypeptide reads, in one-letter code: MMAKLMITVMMVLLLSLQQGADGRSERWRKNQMAASRIMRNLITARGDPPRFCVHKICYEDSECNQWCTGGCNPTQGKCDTA.

A signal peptide spans 1-23 (MMAKLMITVMMVLLLSLQQGADG). Residues 24 to 46 (RSERWRKNQMAASRIMRNLITAR) constitute a propeptide that is removed on maturation. 4-hydroxyproline occurs at positions 49 and 50. Cystine bridges form between cysteine 53–cysteine 68, cysteine 58–cysteine 72, and cysteine 64–cysteine 79. 2 positions are modified to 4-carboxyglutamate: glutamate 60 and glutamate 63.

It belongs to the Pg turripeptide superfamily. In terms of tissue distribution, expressed by the venom duct.

The protein resides in the secreted. The protein is Turripeptide Gdm9.1 of Gemmula diomedea (Gem-turris).